The primary structure comprises 125 residues: Bublin coiled-coil protein (125 aa).

Residues 46–95 are a coiled coil; it reads IRKLDTQLDHLNDYMSKMEERLKAHNDRMMETLKQQKEEREKRRRSFHER. The tract at residues 79–125 is disordered; it reads KQQKEEREKRRRSFHERMSQNQSEDEEFKKQMSSILKRVQSVKRTEK.

In terms of tissue distribution, expressed in many epithelial tissues, including the pharynx, intestine, excretory canal and hypodermis.

The protein localises to the cell junction. It is found in the cytoplasm. Its subcellular location is the cytoskeleton. In terms of biological role, dynamic component of the endotube in intestinal cells, interacts with intermediate filament and regulates intestinal lumen morphology. The sequence is that of Bublin coiled-coil protein from Caenorhabditis elegans.